We begin with the raw amino-acid sequence, 464 residues long: MGKRLLDKLWERHVVATNENGLDLLYIDLHLVHEVTSPQAFEGLRLTNRTVRRPDLTFATMDHNIPTKDVWNITDRIAKQQLDTLRENCKQFQVPLADIGDEEQGIVHVIGPELGLTQPGKTIVCGDSHTATHGAFGALAFGIGTSEVEHVLATQTLWQRKPKAMGIELKGKLPQGVYAKDIILHLLSKYGVAVGTGYVMEFYGEAIHAMDMEERMTLCNMAIEGGAKAGIIAPDEKTFAYVKGRKYAPKDYESIKKKWSELYTDLDVVYDLHILVDVTDLAPYVTWGTNPSMGVRIDEKLPEKHDANDERAFSYMGLSPGQSTYDIPVQHVFIGSCTNSRLSDLEIAASVVKGKKVKEGVRALVVPGSQRVREAAMHKGLHRIFEEAGFEWREPGCSMCLGMNPDQVPEGEHCASTSNRNFEGRQGKGARTHLVSPAMAAAAALYGHFVDIRKESYDGAISYS.

Residues cysteine 337, cysteine 397, and cysteine 400 each coordinate [4Fe-4S] cluster.

This sequence belongs to the aconitase/IPM isomerase family. LeuC type 1 subfamily. In terms of assembly, heterodimer of LeuC and LeuD. [4Fe-4S] cluster serves as cofactor.

It catalyses the reaction (2R,3S)-3-isopropylmalate = (2S)-2-isopropylmalate. The protein operates within amino-acid biosynthesis; L-leucine biosynthesis; L-leucine from 3-methyl-2-oxobutanoate: step 2/4. In terms of biological role, catalyzes the isomerization between 2-isopropylmalate and 3-isopropylmalate, via the formation of 2-isopropylmaleate. In Bacillus cereus (strain B4264), this protein is 3-isopropylmalate dehydratase large subunit.